The primary structure comprises 309 residues: Olfactory receptor 1L8 (309 aa).

At 1 to 26 the chain is on the extracellular side; that stretch reads MERINHTSSVSEFILLGLSSRPEDQK. The N-linked (GlcNAc...) asparagine glycan is linked to asparagine 5. Residues 27–50 traverse the membrane as a helical segment; it reads TLFVLFLIVYLVTITGNLLIILAI. The Cytoplasmic portion of the chain corresponds to 51 to 58; it reads RFNPHLQT. Residues 59–80 form a helical membrane-spanning segment; the sequence is PMYFFLSFLSLTDICFTTSVVP. Over 81-101 the chain is Extracellular; that stretch reads KMLMNFLSEKKTISYAGCLTQ. Cysteine 98 and cysteine 190 are oxidised to a cystine. A helical transmembrane segment spans residues 102–121; it reads MYFLYALGNSDSCLLAVMAF. Residues 122–140 lie on the Cytoplasmic side of the membrane; the sequence is DRYVAVCDPFHYVTTMSHH. A helical membrane pass occupies residues 141–159; that stretch reads HCVLLVAFSCSFPHLHSLL. Over 160 to 197 the chain is Extracellular; the sequence is HTLLLNRLTFCDSNVIHHFLCDLSPVLKLSCSSIFVNE. Residues 198-220 traverse the membrane as a helical segment; it reads IVQMTEAPIVLVTRFLCIAFSYI. At 221–237 the chain is on the cytoplasmic side; sequence RILTTVLKIPSTSGKRK. A helical membrane pass occupies residues 238–260; sequence AFSTCGFYLTVVTLFYGSIFCVY. Residues 261–272 are Extracellular-facing; sequence LQPPSTYAVKDH. A helical membrane pass occupies residues 273 to 292; it reads VATIVYTVLSSMLNPFIYSL. Residues 293–309 are Cytoplasmic-facing; sequence RNKDLKQGLRKLMSKRS.

It belongs to the G-protein coupled receptor 1 family.

The protein localises to the cell membrane. In terms of biological role, odorant receptor. The polypeptide is Olfactory receptor 1L8 (OR1L8) (Homo sapiens (Human)).